The chain runs to 777 residues: Endonuclease MutS2 (777 aa).

328–335 contributes to the ATP binding site; it reads GPNTGGKT. Residues 702–777 enclose the Smr domain; the sequence is LDIRGMNTLE…GDGATEVYLK (76 aa).

It belongs to the DNA mismatch repair MutS family. MutS2 subfamily. As to quaternary structure, homodimer. Binds to stalled ribosomes, contacting rRNA.

In terms of biological role, endonuclease that is involved in the suppression of homologous recombination and thus may have a key role in the control of bacterial genetic diversity. Its function is as follows. Acts as a ribosome collision sensor, splitting the ribosome into its 2 subunits. Detects stalled/collided 70S ribosomes which it binds and splits by an ATP-hydrolysis driven conformational change. Acts upstream of the ribosome quality control system (RQC), a ribosome-associated complex that mediates the extraction of incompletely synthesized nascent chains from stalled ribosomes and their subsequent degradation. Probably generates substrates for RQC. The protein is Endonuclease MutS2 of Carboxydothermus hydrogenoformans (strain ATCC BAA-161 / DSM 6008 / Z-2901).